The following is a 393-amino-acid chain: L-methionine gamma-lyase (393 aa).

Pyridoxal 5'-phosphate is bound by residues 63–65 (YQR) and 93–94 (GM). An L-homocysteine-binding site is contributed by Tyr-119. 206-208 (SAT) serves as a coordination point for pyridoxal 5'-phosphate. At Lys-209 the chain carries N6-(pyridoxal phosphate)lysine. Arg-367 serves as a coordination point for L-homocysteine. Arg-367 is an L-methionine binding site.

This sequence belongs to the trans-sulfuration enzymes family. L-methionine gamma-lyase subfamily. In terms of assembly, homotetramer. Requires pyridoxal 5'-phosphate as cofactor.

It carries out the reaction L-methionine + H2O = methanethiol + 2-oxobutanoate + NH4(+). It catalyses the reaction L-homocysteine + H2O = 2-oxobutanoate + hydrogen sulfide + NH4(+) + H(+). Functionally, catalyzes the alpha,gamma-elimination of L-methionine to produce methanethiol, 2-oxobutanoate and ammonia. Is also able to catalyze the alpha,gamma-elimination of L-homocysteine. This chain is L-methionine gamma-lyase, found in Brevibacterium sandarakinum.